We begin with the raw amino-acid sequence, 274 residues long: Rhamnulose-1-phosphate aldolase (274 aa).

E117 is an active-site residue. 3 residues coordinate Zn(2+): H141, H143, and H212.

It belongs to the aldolase class II family. RhaD subfamily. As to quaternary structure, homotetramer. It depends on Zn(2+) as a cofactor.

The protein resides in the cytoplasm. It carries out the reaction L-rhamnulose 1-phosphate = (S)-lactaldehyde + dihydroxyacetone phosphate. The protein operates within carbohydrate degradation; L-rhamnose degradation; glycerone phosphate from L-rhamnose: step 3/3. Catalyzes the reversible cleavage of L-rhamnulose-1-phosphate to dihydroxyacetone phosphate (DHAP) and L-lactaldehyde. This Escherichia coli O7:K1 (strain IAI39 / ExPEC) protein is Rhamnulose-1-phosphate aldolase.